The following is a 359-amino-acid chain: ELAV-like protein 2 (359 aa).

Positions Met-1–Asn-33 are disordered. RRM domains lie at Thr-39 to Pro-117 and Ala-125 to Asn-205. Residue Ser-221 is modified to Phosphoserine. In terms of domain architecture, RRM 3 spans Trp-276–Asn-354.

Belongs to the RRM elav family. As to quaternary structure, interacts with IGF2BP1. Interacts with MAP1B light chain LC1.

RNA-binding protein that binds to the 3' untranslated region (3'UTR) of target mRNAs. Seems to recognize a GAAA motif. Can bind to its own 3'UTR, the FOS 3'UTR and the ID 3'UTR. The polypeptide is ELAV-like protein 2 (ELAVL2) (Pongo abelii (Sumatran orangutan)).